The following is a 92-amino-acid chain: DNA-directed RNA polymerase subunit Rpo11 (92 aa).

The protein belongs to the archaeal Rpo11/eukaryotic RPB11/RPC19 RNA polymerase subunit family. As to quaternary structure, part of the RNA polymerase complex.

The protein resides in the cytoplasm. It carries out the reaction RNA(n) + a ribonucleoside 5'-triphosphate = RNA(n+1) + diphosphate. In terms of biological role, DNA-dependent RNA polymerase (RNAP) catalyzes the transcription of DNA into RNA using the four ribonucleoside triphosphates as substrates. The sequence is that of DNA-directed RNA polymerase subunit Rpo11 from Methanosarcina acetivorans (strain ATCC 35395 / DSM 2834 / JCM 12185 / C2A).